The sequence spans 246 residues: Carbonic anhydrase (246 aa).

An N-terminal signal peptide occupies residues 1 to 22; the sequence is MKTSLGKAALLALSMMPVTVFA. In terms of domain architecture, Alpha-carbonic anhydrase spans 23-246; it reads SHWSYEGEGS…QPLNGRVVIE (224 aa). The cysteines at positions 46 and 201 are disulfide-linked. His-84 (proton acceptor) is an active-site residue. Zn(2+) contacts are provided by His-111, His-113, and His-130. 197–198 contacts substrate; sequence TT.

This sequence belongs to the alpha-carbonic anhydrase family. Zn(2+) is required as a cofactor.

Its subcellular location is the periplasm. It catalyses the reaction hydrogencarbonate + H(+) = CO2 + H2O. In terms of biological role, reversible hydration of carbon dioxide. This Klebsiella pneumoniae protein is Carbonic anhydrase (cah).